The sequence spans 554 residues: Glucose-6-phosphate isomerase (554 aa).

N-acetylserine is present on Ser2. A Phosphothreonine modification is found at Thr53. Residues 168–169 (GS), 218–223 (SKTFTT), Gln363, Glu367, His398, and Lys520 contribute to the D-glucose 6-phosphate site. Thr220 carries the post-translational modification Phosphothreonine. Catalysis depends on Glu367, which acts as the Proton donor. Residues His398 and Lys520 contribute to the active site.

The protein belongs to the GPI family. In terms of assembly, homodimer.

It is found in the cytoplasm. The protein resides in the cytosol. The enzyme catalyses alpha-D-glucose 6-phosphate = beta-D-fructose 6-phosphate. It participates in carbohydrate degradation; glycolysis; D-glyceraldehyde 3-phosphate and glycerone phosphate from D-glucose: step 2/4. Strongly inhibited by the polyol (sugar alcohol) phosphate D-glucitol 6-phosphate (D-sorbitol 6-phosphate). Also inhibited by the polyol (sugar alcohol) phosphate D-ribitol 5-phosphate. In terms of biological role, in the cytoplasm, catalyzes the conversion of glucose-6-phosphate to fructose-6-phosphate, the second step in glycolysis, and the reverse reaction during gluconeogenesis. This is Glucose-6-phosphate isomerase (PGI1) from Saccharomyces cerevisiae (strain ATCC 204508 / S288c) (Baker's yeast).